A 249-amino-acid polypeptide reads, in one-letter code: Small ribosomal subunit protein uS4m (249 aa).

Residues 133–193 enclose the S4 RNA-binding domain; the sequence is RRLDIIIYRA…PEIVNLLRNQ (61 aa).

Belongs to the universal ribosomal protein uS4 family.

Its subcellular location is the mitochondrion. The chain is Small ribosomal subunit protein uS4m (RPS4) from Reclinomonas americana.